Reading from the N-terminus, the 99-residue chain is Aspartyl/glutamyl-tRNA(Asn/Gln) amidotransferase subunit C (99 aa).

It belongs to the GatC family. As to quaternary structure, heterotrimer of A, B and C subunits.

It carries out the reaction L-glutamyl-tRNA(Gln) + L-glutamine + ATP + H2O = L-glutaminyl-tRNA(Gln) + L-glutamate + ADP + phosphate + H(+). It catalyses the reaction L-aspartyl-tRNA(Asn) + L-glutamine + ATP + H2O = L-asparaginyl-tRNA(Asn) + L-glutamate + ADP + phosphate + 2 H(+). In terms of biological role, allows the formation of correctly charged Asn-tRNA(Asn) or Gln-tRNA(Gln) through the transamidation of misacylated Asp-tRNA(Asn) or Glu-tRNA(Gln) in organisms which lack either or both of asparaginyl-tRNA or glutaminyl-tRNA synthetases. The reaction takes place in the presence of glutamine and ATP through an activated phospho-Asp-tRNA(Asn) or phospho-Glu-tRNA(Gln). The protein is Aspartyl/glutamyl-tRNA(Asn/Gln) amidotransferase subunit C of Bifidobacterium longum (strain NCC 2705).